A 284-amino-acid chain; its full sequence is Protoheme IX farnesyltransferase (284 aa).

9 helical membrane passes run 13-33, 35-55, 84-104, 106-126, 134-154, 163-183, 205-225, 229-249, and 264-284; these read VTVL…TGYP, LTVI…SFIL, FALL…TYFI, LLTA…YTIW, NIVI…AAMA, VMFL…AIFL, VNQI…FYFV, MGYL…GFAY, and FFFS…DSKI.

The protein belongs to the UbiA prenyltransferase family. Protoheme IX farnesyltransferase subfamily.

It localises to the cell inner membrane. The catalysed reaction is heme b + (2E,6E)-farnesyl diphosphate + H2O = Fe(II)-heme o + diphosphate. It functions in the pathway porphyrin-containing compound metabolism; heme O biosynthesis; heme O from protoheme: step 1/1. Its function is as follows. Converts heme B (protoheme IX) to heme O by substitution of the vinyl group on carbon 2 of heme B porphyrin ring with a hydroxyethyl farnesyl side group. The chain is Protoheme IX farnesyltransferase from Leptospira biflexa serovar Patoc (strain Patoc 1 / Ames).